Reading from the N-terminus, the 501-residue chain is Aldehyde dehydrogenase 1A1 (501 aa).

N-acetylserine is present on Ser2. Lys91 and Lys128 each carry N6-acetyllysine. Residues 167 to 170 (IPWN), 193 to 196 (KPAE), 226 to 227 (GP), and 246 to 247 (GS) contribute to the NAD(+) site. Lys252 bears the N6-acetyllysine mark. Glu269 functions as the Proton acceptor in the catalytic mechanism. Residue 269–271 (ELG) participates in NAD(+) binding. The Nucleophile role is filled by Cys303. The interval 336 to 501 (LNSGINQGPQ…VAIKISQKNS (166 aa)) is mediates interaction with PRMT3. 349–353 (EQHDK) contributes to the NAD(+) binding site. N6-acetyllysine occurs at positions 353 and 367. 400–402 (EIF) serves as a coordination point for NAD(+). The residue at position 410 (Lys410) is an N6-acetyllysine. Ser413 carries the phosphoserine modification. Lys419, Lys435, and Lys495 each carry N6-acetyllysine.

This sequence belongs to the aldehyde dehydrogenase family. Homotetramer. Interacts with PRMT3; the interaction is direct, inhibits ALDH1A1 aldehyde dehydrogenase activity and is independent of the methyltransferase activity of PRMT3. In terms of processing, the N-terminus is blocked most probably by acetylation.

It localises to the cytoplasm. Its subcellular location is the cytosol. The protein resides in the cell projection. It is found in the axon. It carries out the reaction an aldehyde + NAD(+) + H2O = a carboxylate + NADH + 2 H(+). The catalysed reaction is all-trans-retinal + NAD(+) + H2O = all-trans-retinoate + NADH + 2 H(+). It catalyses the reaction 9-cis-retinal + NAD(+) + H2O = 9-cis-retinoate + NADH + 2 H(+). The enzyme catalyses 11-cis-retinal + NAD(+) + H2O = 11-cis-retinoate + NADH + 2 H(+). It carries out the reaction 13-cis-retinal + NAD(+) + H2O = 13-cis-retinoate + NADH + 2 H(+). The catalysed reaction is 3-deoxyglucosone + NAD(+) + H2O = 2-dehydro-3-deoxy-D-gluconate + NADH + 2 H(+). It catalyses the reaction (E)-4-hydroxynon-2-enal + NAD(+) + H2O = (E)-4-hydroxynon-2-enoate + NADH + 2 H(+). The enzyme catalyses malonaldehyde + NAD(+) + H2O = 3-oxopropanoate + NADH + 2 H(+). It carries out the reaction hexanal + NAD(+) + H2O = hexanoate + NADH + 2 H(+). The catalysed reaction is propanal + NAD(+) + H2O = propanoate + NADH + 2 H(+). It catalyses the reaction acetaldehyde + NAD(+) + H2O = acetate + NADH + 2 H(+). The enzyme catalyses benzaldehyde + NAD(+) + H2O = benzoate + NADH + 2 H(+). It carries out the reaction 4-aminobutanal + NAD(+) + H2O = 4-aminobutanoate + NADH + 2 H(+). Its pathway is cofactor metabolism; retinol metabolism. Cytosolic dehydrogenase that catalyzes the irreversible oxidation of a wide range of aldehydes to their corresponding carboxylic acid. Functions downstream of retinol dehydrogenases and catalyzes the oxidation of retinaldehyde into retinoic acid, the second step in the oxidation of retinol/vitamin A into retinoic acid. This pathway is crucial to control the levels of retinol and retinoic acid, two important molecules which excess can be teratogenic and cytotoxic. Also oxidizes aldehydes resulting from lipid peroxidation like (E)-4-hydroxynon-2-enal/HNE, malonaldehyde and hexanal that form protein adducts and are highly cytotoxic. By participating for instance to the clearance of (E)-4-hydroxynon-2-enal/HNE in the lens epithelium prevents the formation of HNE-protein adducts and lens opacification. Also functions downstream of fructosamine-3-kinase in the fructosamine degradation pathway by catalyzing the oxidation of 3-deoxyglucosone, the carbohydrate product of fructosamine 3-phosphate decomposition, which is itself a potent glycating agent that may react with lysine and arginine side-chains of proteins. Also has an aminobutyraldehyde dehydrogenase activity and is probably part of an alternative pathway for the biosynthesis of GABA/4-aminobutanoate in midbrain, thereby playing a role in GABAergic synaptic transmission. This Mesocricetus auratus (Golden hamster) protein is Aldehyde dehydrogenase 1A1.